The sequence spans 506 residues: Tabersonine 6,7-epoxidase isoform 1 (506 aa).

The helical transmembrane segment at 1-21 (MEFVVSLFAFVVSCFILLKVA) threads the bilayer. N-linked (GlcNAc...) asparagine glycans are attached at residues Asn173 and Asn261. Cys441 contributes to the heme binding site.

The protein belongs to the cytochrome P450 family. It depends on heme as a cofactor. In terms of tissue distribution, mainly expressed in roots.

It is found in the endoplasmic reticulum membrane. It carries out the reaction (-)-tabersonine + reduced [NADPH--hemoprotein reductase] + O2 = lochnericine + oxidized [NADPH--hemoprotein reductase] + H2O + H(+). It participates in alkaloid biosynthesis. In terms of biological role, component of the monoterpenoid indole alkaloids (MIAs, e.g. echitovenine, tabersonine, lochnericine, 19-hydroxytabersonine and horhammericine) biosynthetic pathway; MIAs are used in cancer treatment and other medical applications. Cytochrome P450 catalyzing the conversion of tabersonine to lochnericine. This Catharanthus roseus (Madagascar periwinkle) protein is Tabersonine 6,7-epoxidase isoform 1.